A 146-amino-acid polypeptide reads, in one-letter code: MASNIIMFEDIFVVDKLDPDGKKFDKVTRVEARSHNLEMFMHLDVNTEVYPLAVGDKFTLAMAPTLNLDGTPDTGYFTPGAKKTLADKYEYIMHGKLYKISERDGKTPKAELYVSFGGLLMLLQGDPAHISHFELDQRLFLLMRKL.

This sequence belongs to the eukaryotic RPB8 RNA polymerase subunit family. Component of the RNA polymerase II, IV and V complexes. Associates with the mediator complex.

It is found in the nucleus. Its function is as follows. DNA-dependent RNA polymerase catalyzes the transcription of DNA into RNA using the four ribonucleoside triphosphates as substrates. Component of RNA polymerase II which synthesizes mRNA precursors and many functional non-coding RNAs. Pol II is the central component of the basal RNA polymerase II transcription machinery. It is composed of mobile elements that move relative to each other. Component of RNA polymerases IV and V which mediate short-interfering RNAs (siRNA) accumulation and subsequent RNA-directed DNA methylation-dependent (RdDM) transcriptional gene silencing (TGS) of endogenous repeated sequences, including transposable elements. This Arabidopsis thaliana (Mouse-ear cress) protein is DNA-directed RNA polymerases II, IV and V subunit 8B (NRPB8B).